Consider the following 139-residue polypeptide: Peptide methionine sulfoxide reductase MsrB (139 aa).

Positions 8-130 (DREWQRELSP…NSASLQLKTQ (123 aa)) constitute a MsrB domain. Residues C47, C50, C96, and C99 each contribute to the Zn(2+) site. C119 serves as the catalytic Nucleophile.

The protein belongs to the MsrB Met sulfoxide reductase family. The cofactor is Zn(2+).

The catalysed reaction is L-methionyl-[protein] + [thioredoxin]-disulfide + H2O = L-methionyl-(R)-S-oxide-[protein] + [thioredoxin]-dithiol. The protein is Peptide methionine sulfoxide reductase MsrB of Acinetobacter baumannii (strain SDF).